The primary structure comprises 242 residues: Myogenic factor 6 (242 aa).

Positions 30–63 (GSPLYPGSDGTLSPCQDQLPPEAGSDSSGEEHVL) are disordered. A bHLH domain is found at 93-144 (DRRKAATLRERRRLKKINEAFEALKRRTVANPNQRLPKVEILRSAISYIERL). The segment at 190-210 (ASDHSRALGGSPKAGGSMVES) is disordered.

As to quaternary structure, efficient DNA binding requires dimerization with another bHLH protein. As to expression, skeletal muscle.

The protein resides in the nucleus. Functionally, involved in muscle differentiation (myogenic factor). Induces fibroblasts to differentiate into myoblasts. Probable sequence specific DNA-binding protein. This is Myogenic factor 6 (MYF6) from Gallus gallus (Chicken).